The primary structure comprises 354 residues: Guanine nucleotide-binding protein G(o) subunit alpha (354 aa).

A lipid anchor (N-myristoyl glycine) is attached at glycine 2. A lipid anchor (S-palmitoyl cysteine) is attached at cysteine 3. Residues 32-354 form the G-alpha domain; that stretch reads KDVKLLLLGA…ANNLRGCGLY (323 aa). Positions 35-48 are G1 motif; it reads KLLLLGAGESGKST. Positions 43, 46, 47, 48, 152, 176, 177, 178, and 179 each coordinate GTP. Serine 47 contacts Mg(2+). The tract at residues 174–182 is G2 motif; that stretch reads DILRTRVKT. Position 182 (threonine 182) interacts with Mg(2+). The G3 motif stretch occupies residues 197–206; the sequence is FRLFDVGGQR. Glutamine 205 is subject to 5-glutamyl histamine. A G4 motif region spans residues 266–273; the sequence is ILFLNKKD. Residues asparagine 270, aspartate 273, and cysteine 325 each coordinate GTP. Positions 324–329 are G5 motif; it reads TCATDT. Asparagine 346 carries the deamidated asparagine; in form Alpha-3 modification. Residue cysteine 351 is the site of S-palmitoyl cysteine attachment.

It belongs to the G-alpha family. G(i/o/t/z) subfamily. G proteins are composed of 3 units; alpha, beta and gamma. The alpha chain contains the guanine nucleotide binding site. Forms a complex with GNB1 and GNG3. Interacts with RGS14. Interacts with RGS16. Interacts with RGS19. Interacts (when palmitoylated) with ADGRG3. Post-translationally, deamidation of Asn-346 converts alpha-1 to alpha-3. In terms of processing, histaminylated at Gln-205 residues by TGM2.

It is found in the cell membrane. It localises to the membrane. The catalysed reaction is GTP + H2O = GDP + phosphate + H(+). With respect to regulation, the GTPase activity is promoted by GTPAse activators, such as RGS14, RGS16 and RGS19. Its function is as follows. Guanine nucleotide-binding proteins (G proteins) function as transducers downstream of G protein-coupled receptors (GPCRs) in numerous signaling cascades. The alpha chain contains the guanine nucleotide binding site and alternates between an active, GTP-bound state and an inactive, GDP-bound state. Signaling by an activated GPCR promotes GDP release and GTP binding. The alpha subunit has a low GTPase activity that converts bound GTP to GDP, thereby terminating the signal. Both GDP release and GTP hydrolysis are modulated by numerous regulatory proteins. Signaling is mediated via effector proteins, such as adenylate cyclase. Inhibits adenylate cyclase activity, leading to decreased intracellular cAMP levels. The sequence is that of Guanine nucleotide-binding protein G(o) subunit alpha (GNAO1) from Cricetulus longicaudatus (Long-tailed dwarf hamster).